The primary structure comprises 180 residues: 20 kDa protein (180 aa).

As to quaternary structure, interacts with Hsp70h.

It localises to the virion. Functionally, involved in systemic transport. Necessary for long-distance transport of the virus through the phloem. This Beet yellows virus (isolate Ukraine) (BYV) protein is 20 kDa protein.